The sequence spans 377 residues: tRNA-specific 2-thiouridylase MnmA (377 aa).

Residues 17 to 24 and methionine 43 contribute to the ATP site; that span reads GMSGGVDS. The interval 103-105 is interaction with target base in tRNA; it reads NPD. Cysteine 108 acts as the Nucleophile in catalysis. Residues cysteine 108 and cysteine 204 are joined by a disulfide bond. Position 132 (glycine 132) interacts with ATP. The interaction with tRNA stretch occupies residues 154–156; sequence KDQ. The Cysteine persulfide intermediate role is filled by cysteine 204. An interaction with tRNA region spans residues 316–317; sequence RY.

The protein belongs to the MnmA/TRMU family.

It localises to the cytoplasm. It catalyses the reaction S-sulfanyl-L-cysteinyl-[protein] + uridine(34) in tRNA + AH2 + ATP = 2-thiouridine(34) in tRNA + L-cysteinyl-[protein] + A + AMP + diphosphate + H(+). Its function is as follows. Catalyzes the 2-thiolation of uridine at the wobble position (U34) of tRNA, leading to the formation of s(2)U34. The chain is tRNA-specific 2-thiouridylase MnmA from Pseudomonas fluorescens (strain ATCC BAA-477 / NRRL B-23932 / Pf-5).